The sequence spans 348 residues: Protein RecA (348 aa).

67-74 (GPESSGKT) is a binding site for ATP.

The protein belongs to the RecA family.

The protein resides in the cytoplasm. Its function is as follows. Can catalyze the hydrolysis of ATP in the presence of single-stranded DNA, the ATP-dependent uptake of single-stranded DNA by duplex DNA, and the ATP-dependent hybridization of homologous single-stranded DNAs. It interacts with LexA causing its activation and leading to its autocatalytic cleavage. In Clostridioides difficile (strain 630) (Peptoclostridium difficile), this protein is Protein RecA.